The following is a 363-amino-acid chain: NAD(P)H-quinone oxidoreductase subunit 1, chloroplastic (363 aa).

6 helical membrane-spanning segments follow: residues 30-50 (LIPI…IVWL), 104-124 (IAVI…HLVL), 127-147 (LSIG…GLLM), 248-268 (YSGI…LVSS), 300-320 (VFGT…FLFI), and 343-363 (FLLP…LISL).

It belongs to the complex I subunit 1 family. In terms of assembly, NDH is composed of at least 16 different subunits, 5 of which are encoded in the nucleus.

It localises to the plastid. The protein localises to the chloroplast thylakoid membrane. It catalyses the reaction a plastoquinone + NADH + (n+1) H(+)(in) = a plastoquinol + NAD(+) + n H(+)(out). The catalysed reaction is a plastoquinone + NADPH + (n+1) H(+)(in) = a plastoquinol + NADP(+) + n H(+)(out). Functionally, NDH shuttles electrons from NAD(P)H:plastoquinone, via FMN and iron-sulfur (Fe-S) centers, to quinones in the photosynthetic chain and possibly in a chloroplast respiratory chain. The immediate electron acceptor for the enzyme in this species is believed to be plastoquinone. Couples the redox reaction to proton translocation, and thus conserves the redox energy in a proton gradient. In Lactuca sativa (Garden lettuce), this protein is NAD(P)H-quinone oxidoreductase subunit 1, chloroplastic.